The sequence spans 88 residues: Small ribosomal subunit protein bS16c (88 aa).

The protein belongs to the bacterial ribosomal protein bS16 family.

It localises to the plastid. It is found in the chloroplast. The protein is Small ribosomal subunit protein bS16c of Sinapis alba (White mustard).